Consider the following 141-residue polypeptide: Hemoglobin subunit alpha (141 aa).

The 141-residue stretch at 1–141 (VLSANDKSNV…VSTVLTSKYR (141 aa)) folds into the Globin domain. Ser-3 is subject to Phosphoserine. Lys-7 and Lys-11 each carry N6-succinyllysine. Residue Lys-16 is modified to N6-acetyllysine; alternate. An N6-succinyllysine; alternate modification is found at Lys-16. A Phosphotyrosine modification is found at Tyr-24. Ser-35 carries the post-translational modification Phosphoserine. Lys-40 carries the post-translational modification N6-succinyllysine. Ser-49 bears the Phosphoserine mark. His-58 contributes to the O2 binding site. His-87 serves as a coordination point for heme b. Position 102 is a phosphoserine (Ser-102). At Thr-108 the chain carries Phosphothreonine. Phosphoserine is present on Ser-124. Residues Thr-134 and Thr-137 each carry the phosphothreonine modification. Ser-138 carries the phosphoserine modification.

It belongs to the globin family. As to quaternary structure, heterotetramer of two alpha chains and two beta chains. Red blood cells.

Involved in oxygen transport from the lung to the various peripheral tissues. In terms of biological role, hemopressin acts as an antagonist peptide of the cannabinoid receptor CNR1. Hemopressin-binding efficiently blocks cannabinoid receptor CNR1 and subsequent signaling. The chain is Hemoglobin subunit alpha (HBA) from Hippopotamus amphibius (Hippopotamus).